A 416-amino-acid chain; its full sequence is Alpha-1,3/1,6-mannosyltransferase ALG2 (416 aa).

Topologically, residues methionine 1–arginine 84 are cytoplasmic. An intramembrane region (helical) is located at residues glycine 85–alanine 105. At aspartate 106–valine 416 the chain is on the cytoplasmic side.

Belongs to the glycosyltransferase group 1 family. Glycosyltransferase 4 subfamily.

It is found in the endoplasmic reticulum membrane. It catalyses the reaction a beta-D-Man-(1-&gt;4)-beta-D-GlcNAc-(1-&gt;4)-alpha-D-GlcNAc-diphospho-di-trans,poly-cis-dolichol + GDP-alpha-D-mannose = an alpha-D-Man-(1-&gt;3)-beta-D-Man-(1-&gt;4)-beta-D-GlcNAc-(1-&gt;4)-alpha-D-GlcNAc-diphospho-di-trans,poly-cis-dolichol + GDP + H(+). The enzyme catalyses an alpha-D-Man-(1-&gt;3)-beta-D-Man-(1-&gt;4)-beta-D-GlcNAc-(1-&gt;4)-alpha-D-GlcNAc-diphospho-di-trans,poly-cis-dolichol + GDP-alpha-D-mannose = an alpha-D-Man-(1-&gt;3)-[alpha-D-Man-(1-&gt;6)]-beta-D-Man-(1-&gt;4)-beta-D-GlcNAc-(1-&gt;4)-alpha-D-GlcNAc-diphospho-di-trans,poly-cis-dolichol + GDP + H(+). It carries out the reaction a beta-D-Man-(1-&gt;4)-beta-D-GlcNAc-(1-&gt;4)-alpha-D-GlcNAc-diphospho-di-trans,poly-cis-dolichol + GDP-alpha-D-mannose = an alpha-D-Man-(1-&gt;6)-beta-D-Man-(1-&gt;4)-beta-D-GlcNAc-(1-&gt;4)-alpha-D-GlcNAc-diphospho-di-trans,poly-cis-dolichol + GDP + H(+). The catalysed reaction is an alpha-D-Man-(1-&gt;6)-beta-D-Man-(1-&gt;4)-beta-D-GlcNAc-(1-&gt;4)-alpha-D-GlcNAc-diphospho-di-trans,poly-cis-dolichol + GDP-alpha-D-mannose = an alpha-D-Man-(1-&gt;3)-[alpha-D-Man-(1-&gt;6)]-beta-D-Man-(1-&gt;4)-beta-D-GlcNAc-(1-&gt;4)-alpha-D-GlcNAc-diphospho-di-trans,poly-cis-dolichol + GDP + H(+). It participates in protein modification; protein glycosylation. Mannosyltransferase that operates in the biosynthetic pathway of dolichol-linked oligosaccharides, the glycan precursors employed in protein asparagine (N)-glycosylation. The assembly of dolichol-linked oligosaccharides begins on the cytosolic side of the endoplasmic reticulum membrane and finishes in its lumen. The sequential addition of sugars to dolichol pyrophosphate produces dolichol-linked oligosaccharides containing fourteen sugars, including two GlcNAcs, nine mannoses and three glucoses. Once assembled, the oligosaccharide is transferred from the lipid to nascent proteins by oligosaccharyltransferases. Catalyzes, on the cytoplasmic face of the endoplasmic reticulum, the addition of the second and third mannose residues to the dolichol-linked oligosaccharide chain, to produce Man3GlcNAc(2)-PP-dolichol core oligosaccharide. Man3GlcNAc(2)-PP-dolichol is a substrate for ALG11, the following enzyme in the biosynthetic pathway. While both alpha 1,3 and alpha 1,6 linkages are possible, the sequential addition of alpha 1,3 followed by alpha 1,6 is probably the preferred route. The polypeptide is Alpha-1,3/1,6-mannosyltransferase ALG2 (ALG2) (Homo sapiens (Human)).